Consider the following 460-residue polypeptide: Glutamyl-tRNA reductase (460 aa).

Residues 48 to 51 (TCNR), Ser100, 105 to 107 (EDQ), and Gln111 contribute to the substrate site. Catalysis depends on Cys49, which acts as the Nucleophile. NADP(+) is bound at residue 180-185 (GAGEIG).

The protein belongs to the glutamyl-tRNA reductase family. In terms of assembly, homodimer.

It catalyses the reaction (S)-4-amino-5-oxopentanoate + tRNA(Glu) + NADP(+) = L-glutamyl-tRNA(Glu) + NADPH + H(+). Its pathway is porphyrin-containing compound metabolism; protoporphyrin-IX biosynthesis; 5-aminolevulinate from L-glutamyl-tRNA(Glu): step 1/2. Catalyzes the NADPH-dependent reduction of glutamyl-tRNA(Glu) to glutamate 1-semialdehyde (GSA). The protein is Glutamyl-tRNA reductase of Methanosarcina acetivorans (strain ATCC 35395 / DSM 2834 / JCM 12185 / C2A).